Here is a 362-residue protein sequence, read N- to C-terminus: Chorismate synthase (362 aa).

The NADP(+) site is built by Arg-48 and Arg-54. Residues 125–127 (RSS), 238–239 (NA), Gly-278, 293–297 (KPTSS), and Arg-319 contribute to the FMN site.

The protein belongs to the chorismate synthase family. In terms of assembly, homotetramer. FMNH2 is required as a cofactor.

It carries out the reaction 5-O-(1-carboxyvinyl)-3-phosphoshikimate = chorismate + phosphate. It functions in the pathway metabolic intermediate biosynthesis; chorismate biosynthesis; chorismate from D-erythrose 4-phosphate and phosphoenolpyruvate: step 7/7. Its function is as follows. Catalyzes the anti-1,4-elimination of the C-3 phosphate and the C-6 proR hydrogen from 5-enolpyruvylshikimate-3-phosphate (EPSP) to yield chorismate, which is the branch point compound that serves as the starting substrate for the three terminal pathways of aromatic amino acid biosynthesis. This reaction introduces a second double bond into the aromatic ring system. In Tolumonas auensis (strain DSM 9187 / NBRC 110442 / TA 4), this protein is Chorismate synthase.